The following is a 129-amino-acid chain: Phosphoribosyl-AMP cyclohydrolase (129 aa).

Aspartate 76 is a Mg(2+) binding site. Cysteine 77 serves as a coordination point for Zn(2+). Mg(2+) contacts are provided by aspartate 78 and aspartate 80. Residues cysteine 97 and cysteine 104 each coordinate Zn(2+).

It belongs to the PRA-CH family. In terms of assembly, homodimer. Requires Mg(2+) as cofactor. It depends on Zn(2+) as a cofactor.

The protein localises to the cytoplasm. It catalyses the reaction 1-(5-phospho-beta-D-ribosyl)-5'-AMP + H2O = 1-(5-phospho-beta-D-ribosyl)-5-[(5-phospho-beta-D-ribosylamino)methylideneamino]imidazole-4-carboxamide. Its pathway is amino-acid biosynthesis; L-histidine biosynthesis; L-histidine from 5-phospho-alpha-D-ribose 1-diphosphate: step 3/9. Its function is as follows. Catalyzes the hydrolysis of the adenine ring of phosphoribosyl-AMP. The protein is Phosphoribosyl-AMP cyclohydrolase of Methylibium petroleiphilum (strain ATCC BAA-1232 / LMG 22953 / PM1).